Reading from the N-terminus, the 384-residue chain is UDP-N-acetylglucosamine--N-acetylmuramyl-(pentapeptide) pyrophosphoryl-undecaprenol N-acetylglucosamine transferase (384 aa).

Residues 17–19 (TGG), Asn-131, Arg-172, Ser-200, and Gln-301 each bind UDP-N-acetyl-alpha-D-glucosamine.

It belongs to the glycosyltransferase 28 family. MurG subfamily.

It is found in the cell inner membrane. The catalysed reaction is di-trans,octa-cis-undecaprenyl diphospho-N-acetyl-alpha-D-muramoyl-L-alanyl-D-glutamyl-meso-2,6-diaminopimeloyl-D-alanyl-D-alanine + UDP-N-acetyl-alpha-D-glucosamine = di-trans,octa-cis-undecaprenyl diphospho-[N-acetyl-alpha-D-glucosaminyl-(1-&gt;4)]-N-acetyl-alpha-D-muramoyl-L-alanyl-D-glutamyl-meso-2,6-diaminopimeloyl-D-alanyl-D-alanine + UDP + H(+). The protein operates within cell wall biogenesis; peptidoglycan biosynthesis. Functionally, cell wall formation. Catalyzes the transfer of a GlcNAc subunit on undecaprenyl-pyrophosphoryl-MurNAc-pentapeptide (lipid intermediate I) to form undecaprenyl-pyrophosphoryl-MurNAc-(pentapeptide)GlcNAc (lipid intermediate II). The sequence is that of UDP-N-acetylglucosamine--N-acetylmuramyl-(pentapeptide) pyrophosphoryl-undecaprenol N-acetylglucosamine transferase from Granulibacter bethesdensis (strain ATCC BAA-1260 / CGDNIH1).